Here is a 143-residue protein sequence, read N- to C-terminus: uncharacterized protein (143 aa).

The segment at 35–59 is disordered; that stretch reads ITKDRGDRDDGRYGEPRIQRKPGQL. A compositionally biased stretch (basic and acidic residues) spans 36-52; sequence TKDRGDRDDGRYGEPRI.

This is an uncharacterized protein from Streptomyces fradiae (Streptomyces roseoflavus).